We begin with the raw amino-acid sequence, 178 residues long: Probable chorismate pyruvate-lyase (178 aa).

Residues methionine 37, arginine 78, leucine 114, and glutamate 165 each coordinate substrate.

This sequence belongs to the UbiC family.

It localises to the cytoplasm. The enzyme catalyses chorismate = 4-hydroxybenzoate + pyruvate. It participates in cofactor biosynthesis; ubiquinone biosynthesis. Functionally, removes the pyruvyl group from chorismate, with concomitant aromatization of the ring, to provide 4-hydroxybenzoate (4HB) for the ubiquinone pathway. The protein is Probable chorismate pyruvate-lyase of Aeromonas salmonicida (strain A449).